The primary structure comprises 505 residues: Glucose-6-phosphate 1-dehydrogenase (505 aa).

Ser2 carries the N-acetylserine modification. Residues 18–25 (GASGDLAK) and Arg52 each bind NADP(+). A Phosphoserine modification is found at Ser142. Tyr145 carries the phosphotyrosine modification. Lys157 lines the NADP(+) pocket. Residues Lys157, 187–191 (HYLGK), Glu225, and Asp244 contribute to the D-glucose 6-phosphate site. The Proton acceptor role is filled by His249. Position 340 (Arg340) interacts with NADP(+). Lys343 contributes to the D-glucose 6-phosphate binding site. Residues Lys349, Arg353, and Arg375 each coordinate NADP(+). D-glucose 6-phosphate is bound at residue Gln377. NADP(+) is bound by residues 383 to 385 (YLK) and Arg470.

Belongs to the glucose-6-phosphate dehydrogenase family.

It catalyses the reaction D-glucose 6-phosphate + NADP(+) = 6-phospho-D-glucono-1,5-lactone + NADPH + H(+). It participates in carbohydrate degradation; pentose phosphate pathway; D-ribulose 5-phosphate from D-glucose 6-phosphate (oxidative stage): step 1/3. Its function is as follows. Catalyzes the rate-limiting step of the oxidative pentose-phosphate pathway, which represents a route for the dissimilation of carbohydrates besides glycolysis. The main function of this enzyme is to provide reducing power (NADPH) and pentose phosphates for fatty acid and nucleic acid synthesis. In Saccharomyces cerevisiae (strain ATCC 204508 / S288c) (Baker's yeast), this protein is Glucose-6-phosphate 1-dehydrogenase (ZWF1).